A 212-amino-acid polypeptide reads, in one-letter code: Ribonuclease HII (212 aa).

An RNase H type-2 domain is found at 17 to 211 (RVLAGIDEAG…VLELLDLTDS (195 aa)). Residues aspartate 23, glutamate 24, and aspartate 120 each contribute to the a divalent metal cation site.

The protein belongs to the RNase HII family. Requires Mn(2+) as cofactor. Mg(2+) serves as cofactor.

It is found in the cytoplasm. The catalysed reaction is Endonucleolytic cleavage to 5'-phosphomonoester.. Its function is as follows. Endonuclease that specifically degrades the RNA of RNA-DNA hybrids. In Chloroflexus aggregans (strain MD-66 / DSM 9485), this protein is Ribonuclease HII.